The following is a 274-amino-acid chain: MQKIIKLKDLKIGNDLPFTLIAGPCQIEGLDHALFMAEELVKLTTRLNIPFIYKSSFDKANRTSVNGARGLGIDKGLEVLAEVKRAFNCPIVTDVHSENQCAEVAKIVDMLQIPAFLCRQTDLLQAAAATGKIVNVKKGQFLAPWDMKNVHKKLESFGAKDILLTERGTCFGYNNLVSDMRGLAIMAELNTPVIFDATHSVQQPGGLGGSTGGERKYVELLAKAAVAVGVAGLYMEVHQDPDNAPSDGPCMIRLDNLERVLTKLKKYDEITKEK.

The protein belongs to the KdsA family.

It is found in the cytoplasm. The catalysed reaction is D-arabinose 5-phosphate + phosphoenolpyruvate + H2O = 3-deoxy-alpha-D-manno-2-octulosonate-8-phosphate + phosphate. It participates in carbohydrate biosynthesis; 3-deoxy-D-manno-octulosonate biosynthesis; 3-deoxy-D-manno-octulosonate from D-ribulose 5-phosphate: step 2/3. Its pathway is bacterial outer membrane biogenesis; lipopolysaccharide biosynthesis. The chain is 2-dehydro-3-deoxyphosphooctonate aldolase from Rickettsia bellii (strain OSU 85-389).